The sequence spans 209 residues: Urease accessory protein UreG (209 aa).

10–17 serves as a coordination point for GTP; the sequence is GPVGSGKT.

It belongs to the SIMIBI class G3E GTPase family. UreG subfamily. As to quaternary structure, homodimer. UreD, UreF and UreG form a complex that acts as a GTP-hydrolysis-dependent molecular chaperone, activating the urease apoprotein by helping to assemble the nickel containing metallocenter of UreC. The UreE protein probably delivers the nickel.

The protein resides in the cytoplasm. Its function is as follows. Facilitates the functional incorporation of the urease nickel metallocenter. This process requires GTP hydrolysis, probably effectuated by UreG. This Lysinibacillus sphaericus (strain C3-41) protein is Urease accessory protein UreG.